Reading from the N-terminus, the 270-residue chain is Methylthioribulose-1-phosphate dehydratase (270 aa).

Cys-122 contributes to the substrate binding site. His-140 and His-142 together coordinate Zn(2+). The active-site Proton donor/acceptor is the Glu-165. A Zn(2+)-binding site is contributed by His-230.

The protein belongs to the aldolase class II family. MtnB subfamily. Requires Zn(2+) as cofactor.

The protein resides in the cytoplasm. It catalyses the reaction 5-(methylsulfanyl)-D-ribulose 1-phosphate = 5-methylsulfanyl-2,3-dioxopentyl phosphate + H2O. The protein operates within amino-acid biosynthesis; L-methionine biosynthesis via salvage pathway; L-methionine from S-methyl-5-thio-alpha-D-ribose 1-phosphate: step 2/6. Functionally, catalyzes the dehydration of methylthioribulose-1-phosphate (MTRu-1-P) into 2,3-diketo-5-methylthiopentyl-1-phosphate (DK-MTP-1-P). This Candida albicans (strain WO-1) (Yeast) protein is Methylthioribulose-1-phosphate dehydratase.